The primary structure comprises 723 residues: Threonine--tRNA ligase 1, cytoplasmic (723 aa).

Polar residues predominate over residues Met1–Ser10. Positions Met1–Pro49 are disordered. Basic and acidic residues predominate over residues Met13–Ser39. Residue Ser39 is modified to Phosphoserine. The 65-residue stretch at Asp79–Lys143 folds into the TGS domain. At Lys243 the chain carries N6-acetyllysine. Thr246 carries the post-translational modification Phosphothreonine. Position 298 is a phosphotyrosine (Tyr298). A Phosphothreonine modification is found at Thr453. The residue at position 702 (Ser702) is a Phosphoserine.

It belongs to the class-II aminoacyl-tRNA synthetase family. Homodimer. ISGylated.

The protein localises to the cytoplasm. It carries out the reaction tRNA(Thr) + L-threonine + ATP = L-threonyl-tRNA(Thr) + AMP + diphosphate + H(+). Its function is as follows. Catalyzes the attachment of threonine to tRNA(Thr) in a two-step reaction: threonine is first activated by ATP to form Thr-AMP and then transferred to the acceptor end of tRNA(Thr). Also edits incorrectly charged tRNA(Thr) via its editing domain, at the post-transfer stage. This is Threonine--tRNA ligase 1, cytoplasmic (TARS1) from Bos taurus (Bovine).